Consider the following 582-residue polypeptide: 2-(3-amino-3-carboxypropyl)histidine synthase subunit 2 (582 aa).

[4Fe-4S] cluster-binding residues include Cys-135, Cys-156, and Cys-373. Positions 416-467 (SILDQPPPSSNSPGNSQEANEGPEFGDHARDEDEDAMSEPESAPPEFDLRTG) are disordered.

It belongs to the DPH1/DPH2 family. DPH2 subfamily. Component of the 2-(3-amino-3-carboxypropyl)histidine synthase complex composed of dph1, dph2, dph3 and a NADH-dependent reductase, predominantly cbr1. [4Fe-4S] cluster is required as a cofactor.

The protein localises to the cytoplasm. The protein operates within protein modification; peptidyl-diphthamide biosynthesis. Functionally, required for the first step of diphthamide biosynthesis, a post-translational modification of histidine which occurs in elongation factor 2. Dph1 and dph2 transfer a 3-amino-3-carboxypropyl (ACP) group from S-adenosyl-L-methionine (SAM) to a histidine residue, the reaction is assisted by a reduction system comprising dph3 and a NADH-dependent reductase, predominantly cbr1. Facilitates the reduction of the catalytic iron-sulfur cluster found in the dph1 subunit. In Emericella nidulans (strain FGSC A4 / ATCC 38163 / CBS 112.46 / NRRL 194 / M139) (Aspergillus nidulans), this protein is 2-(3-amino-3-carboxypropyl)histidine synthase subunit 2 (dph2).